A 1049-amino-acid polypeptide reads, in one-letter code: Cilia- and flagella-associated protein 337 (1049 aa).

Residues G81 to E116 enclose the EF-hand domain. WD repeat units follow at residues K138–F177, N358–G397, G401–R440, S487–T528, H531–L570, and Q633–V671. Residues L691–R712 form a disordered region. The span at G695–V711 shows a compositional bias: polar residues. WD repeat units follow at residues E719–E766, A769–S809, and P825–F866.

The protein belongs to the CFAP337 family. As to quaternary structure, associates with components of the nexin-dynein regulatory complex (N-DRC) and the CFAP184:CFAP263 complex.

It is found in the cell projection. The protein resides in the cilium. Functionally, associates with components of the nexin-dynein regulatory complex (N-DRC), a key regulator of ciliary/flagellar motility, and might act as an inner dynein arm (IDA) hub or linkage. The sequence is that of Cilia- and flagella-associated protein 337 from Homo sapiens (Human).